Reading from the N-terminus, the 72-residue chain is Large ribosomal subunit protein uL29 (72 aa).

Belongs to the universal ribosomal protein uL29 family.

The protein is Large ribosomal subunit protein uL29 of Microcystis aeruginosa (strain NIES-843 / IAM M-2473).